A 158-amino-acid chain; its full sequence is 3-dehydroquinate dehydratase (158 aa).

Y22 (proton acceptor) is an active-site residue. Residues N74, H80, and D87 each coordinate substrate. H100 acts as the Proton donor in catalysis. Residues 101–102 (IS) and R111 contribute to the substrate site.

It belongs to the type-II 3-dehydroquinase family. As to quaternary structure, homododecamer.

It carries out the reaction 3-dehydroquinate = 3-dehydroshikimate + H2O. Its pathway is metabolic intermediate biosynthesis; chorismate biosynthesis; chorismate from D-erythrose 4-phosphate and phosphoenolpyruvate: step 3/7. Catalyzes a trans-dehydration via an enolate intermediate. This Helicobacter hepaticus (strain ATCC 51449 / 3B1) protein is 3-dehydroquinate dehydratase.